The primary structure comprises 1760 residues: Chitin synthase csmB (1760 aa).

A compositionally biased stretch (low complexity) spans 1–17 (MSNRFSVYSSHSTGVSS). Residues 1–23 (MSNRFSVYSSHSTGVSSARPSAP) form a disordered region. The Myosin motor domain maps to 1 to 374 (MSNRFSVYSS…TVSITVVDIP (374 aa)). A glycan (N-linked (GlcNAc...) asparagine) is linked at N275. The segment at 344–363 (LDNDPSTSGGSGPGGQWTDD) is disordered. A region of interest (actin-binding) is located at residue P374. The next 2 helical transmembrane spans lie at 731–751 (IWVG…LRWI) and 767–787 (LVLM…IIAF). N-linked (GlcNAc...) asparagine glycans are attached at residues N878, N906, and N995. The chain crosses the membrane as a helical span at residues 1029 to 1049 (ILLSFTVLICAVILVKFVSAL). N1394 is a glycosylation site (N-linked (GlcNAc...) asparagine). A run of 3 helical transmembrane segments spans residues 1419–1439 (FVVL…VYLG), 1452–1472 (FPMI…IIFL), and 1480–1500 (IGWM…LPLY). N1584 and N1652 each carry an N-linked (GlcNAc...) asparagine glycan. Residues 1702–1758 (GPDEGAITEAIRACLAEVDLDTVTKKQVRALVEQRLQTTLMGDKRTFLDRQIDHELA) enclose the DEK-C domain.

This sequence in the N-terminal section; belongs to the TRAFAC class myosin-kinesin ATPase superfamily. Myosin family. In the C-terminal section; belongs to the chitin synthase family. Class V subfamily.

Its subcellular location is the cell membrane. It localises to the cell septum. The protein localises to the cell tip. It catalyses the reaction [(1-&gt;4)-N-acetyl-beta-D-glucosaminyl](n) + UDP-N-acetyl-alpha-D-glucosamine = [(1-&gt;4)-N-acetyl-beta-D-glucosaminyl](n+1) + UDP + H(+). Functionally, polymerizes chitin, a structural polymer of the cell wall and septum, by transferring the sugar moiety of UDP-GlcNAc to the non-reducing end of the growing chitin polymer. Plays an important role in septal growth or maintenance. Mediates colony spore formation. The sequence is that of Chitin synthase csmB from Aspergillus niger (strain ATCC MYA-4892 / CBS 513.88 / FGSC A1513).